The primary structure comprises 121 residues: UPF0295 protein ABC1323 (121 aa).

2 consecutive transmembrane segments (helical) span residues threonine 14 to lysine 34 and valine 41 to isoleucine 61.

This sequence belongs to the UPF0295 family.

The protein localises to the cell membrane. In Shouchella clausii (strain KSM-K16) (Alkalihalobacillus clausii), this protein is UPF0295 protein ABC1323.